We begin with the raw amino-acid sequence, 212 residues long: Large ribosomal subunit protein uL3 (212 aa).

Residues 133 to 152 (RGSMGHGSKYHRRPGSLGAK) are disordered.

Belongs to the universal ribosomal protein uL3 family. As to quaternary structure, part of the 50S ribosomal subunit. Forms a cluster with proteins L14 and L19.

One of the primary rRNA binding proteins, it binds directly near the 3'-end of the 23S rRNA, where it nucleates assembly of the 50S subunit. The chain is Large ribosomal subunit protein uL3 from Syntrophomonas wolfei subsp. wolfei (strain DSM 2245B / Goettingen).